The chain runs to 98 residues: Hainantoxin-XVII.2 (98 aa).

An N-terminal signal peptide occupies residues 1-40 (MTTVGVSLFRRSPEKITMKIAAFLGLSFLLIASYVLICEA). Residues 41–64 (QHPGFQELLILEENMRDPENSKER) constitute a propeptide that is removed on maturation. Intrachain disulfides connect Cys66/Cys81, Cys73/Cys85, and Cys80/Cys95.

It belongs to the hainantoxin family. 17 subfamily. In terms of tissue distribution, expressed by the venom gland.

Its subcellular location is the secreted. Its function is as follows. Putative ion channel inhibitor. The chain is Hainantoxin-XVII.2 from Cyriopagopus hainanus (Chinese bird spider).